The following is a 380-amino-acid chain: Probable protein phosphatase 2C 2 (380 aa).

One can recognise a PPM-type phosphatase domain in the interval 122–376 (GYSVYCKRGK…DDISVMLIQL (255 aa)). Residues Asp158, Gly159, Asp321, and Asp367 each coordinate Mn(2+).

It belongs to the PP2C family. The cofactor is Mg(2+). It depends on Mn(2+) as a cofactor.

It catalyses the reaction O-phospho-L-seryl-[protein] + H2O = L-seryl-[protein] + phosphate. The catalysed reaction is O-phospho-L-threonyl-[protein] + H2O = L-threonyl-[protein] + phosphate. The polypeptide is Probable protein phosphatase 2C 2 (Arabidopsis thaliana (Mouse-ear cress)).